The following is a 140-amino-acid chain: Cystatin-C (140 aa).

An N-terminal signal peptide occupies residues 1-20; the sequence is MASPLRSLMLLLAVLAVAWA. Residues 75–79 carry the Secondary area of contact motif; sequence QLVAG. 2 disulfide bridges follow: Cys93–Cys103 and Cys117–Cys137. Asn99 carries N-linked (GlcNAc...) asparagine glycosylation.

The protein belongs to the cystatin family.

The protein resides in the secreted. Functionally, as an inhibitor of cysteine proteinases, this protein is thought to serve an important physiological role as a local regulator of this enzyme activity. Known to inhibit cathepsin B, H, and L. The polypeptide is Cystatin-C (Cst3) (Rattus norvegicus (Rat)).